The chain runs to 433 residues: Serine hydroxymethyltransferase (433 aa).

(6S)-5,6,7,8-tetrahydrofolate contacts are provided by residues L132 and 136–138; that span reads GHL. K241 is modified (N6-(pyridoxal phosphate)lysine).

It belongs to the SHMT family. As to quaternary structure, homodimer. It depends on pyridoxal 5'-phosphate as a cofactor.

It localises to the cytoplasm. It catalyses the reaction (6R)-5,10-methylene-5,6,7,8-tetrahydrofolate + glycine + H2O = (6S)-5,6,7,8-tetrahydrofolate + L-serine. The protein operates within one-carbon metabolism; tetrahydrofolate interconversion. Its pathway is amino-acid biosynthesis; glycine biosynthesis; glycine from L-serine: step 1/1. Catalyzes the reversible interconversion of serine and glycine with tetrahydrofolate (THF) serving as the one-carbon carrier. This reaction serves as the major source of one-carbon groups required for the biosynthesis of purines, thymidylate, methionine, and other important biomolecules. Also exhibits THF-independent aldolase activity toward beta-hydroxyamino acids, producing glycine and aldehydes, via a retro-aldol mechanism. This Rhodopseudomonas palustris (strain HaA2) protein is Serine hydroxymethyltransferase.